Reading from the N-terminus, the 297-residue chain is Ribosomal RNA small subunit methyltransferase H (297 aa).

Residues 36-38 (GGH), aspartate 56, leucine 90, aspartate 104, and histidine 111 contribute to the S-adenosyl-L-methionine site.

This sequence belongs to the methyltransferase superfamily. RsmH family.

Its subcellular location is the cytoplasm. The catalysed reaction is cytidine(1402) in 16S rRNA + S-adenosyl-L-methionine = N(4)-methylcytidine(1402) in 16S rRNA + S-adenosyl-L-homocysteine + H(+). Its function is as follows. Specifically methylates the N4 position of cytidine in position 1402 (C1402) of 16S rRNA. This chain is Ribosomal RNA small subunit methyltransferase H, found in Dictyoglomus thermophilum (strain ATCC 35947 / DSM 3960 / H-6-12).